Here is a 155-residue protein sequence, read N- to C-terminus: SsrA-binding protein (155 aa).

This sequence belongs to the SmpB family.

The protein localises to the cytoplasm. Required for rescue of stalled ribosomes mediated by trans-translation. Binds to transfer-messenger RNA (tmRNA), required for stable association of tmRNA with ribosomes. tmRNA and SmpB together mimic tRNA shape, replacing the anticodon stem-loop with SmpB. tmRNA is encoded by the ssrA gene; the 2 termini fold to resemble tRNA(Ala) and it encodes a 'tag peptide', a short internal open reading frame. During trans-translation Ala-aminoacylated tmRNA acts like a tRNA, entering the A-site of stalled ribosomes, displacing the stalled mRNA. The ribosome then switches to translate the ORF on the tmRNA; the nascent peptide is terminated with the 'tag peptide' encoded by the tmRNA and targeted for degradation. The ribosome is freed to recommence translation, which seems to be the essential function of trans-translation. This chain is SsrA-binding protein, found in Streptococcus pneumoniae (strain P1031).